We begin with the raw amino-acid sequence, 203 residues long: CASP-like protein 1B1 (203 aa).

Topologically, residues 1–24 are cytoplasmic; the sequence is MALVNAEKPEVGSSPSSLGPRNKS. Residues 25–45 traverse the membrane as a helical segment; sequence WVLLMLRFVAFLATAAATIVM. The Extracellular portion of the chain corresponds to 46-76; it reads AANRETKTFVVATIGSTPIKATVTAKFQHTP. The chain crosses the membrane as a helical span at residues 77–97; sequence AFVFFVIANGMGSIHNLVMIA. Over 98-114 the chain is Cytoplasmic; sequence GDTFVRKFDYKGLRWVT. The chain crosses the membrane as a helical span at residues 115-135; that stretch reads VAILDMLTAALISGGVNAAVF. Residues 136-165 are Extracellular-facing; it reads MAELGKNGNSHAKWNKICDRFGSFCDHGGA. A helical membrane pass occupies residues 166-186; sequence AIIASFIGLLLMLVISIISII. Topologically, residues 187–203 are cytoplasmic; the sequence is KLLKPKSPLVDSHVLAP.

The protein belongs to the Casparian strip membrane proteins (CASP) family. In terms of assembly, homodimer and heterodimers.

The protein resides in the cell membrane. The chain is CASP-like protein 1B1 from Ricinus communis (Castor bean).